The following is a 149-amino-acid chain: MKKILVLNGINLNMFGKRDPAHYGTATLEQIDARVAAWGAELGLQIDCFQTNHEGEMVERIHRAHEEGVDALIINAGAWTHYSYGIADALAILKAPVIEVHMSNIHAREEFRHHSVIAGLARGQICGFGVGSYHLALLAASELLNAGQE.

Tyrosine 23 (proton acceptor) is an active-site residue. 3 residues coordinate substrate: asparagine 75, histidine 81, and aspartate 88. Histidine 101 serves as the catalytic Proton donor. Residues 102–103 (MS) and arginine 112 contribute to the substrate site.

This sequence belongs to the type-II 3-dehydroquinase family. In terms of assembly, homododecamer.

It catalyses the reaction 3-dehydroquinate = 3-dehydroshikimate + H2O. It functions in the pathway metabolic intermediate biosynthesis; chorismate biosynthesis; chorismate from D-erythrose 4-phosphate and phosphoenolpyruvate: step 3/7. Functionally, catalyzes a trans-dehydration via an enolate intermediate. The polypeptide is 3-dehydroquinate dehydratase (Pelobacter propionicus (strain DSM 2379 / NBRC 103807 / OttBd1)).